A 131-amino-acid chain; its full sequence is MLIGVGTDIVQIPRIEKILHLYPELFAKKILASKELKQFALLGKINHAAFLAKRFAAKEAVSKAFGVGIGQGINFKDITILNNDLGKPIVEVSSNYTNTLSPFNIHLSLADDYPVCVAFAVIESSYNVILG.

Mg(2+) is bound by residues D8 and E59.

Belongs to the P-Pant transferase superfamily. AcpS family. Mg(2+) serves as cofactor.

It is found in the cytoplasm. The catalysed reaction is apo-[ACP] + CoA = holo-[ACP] + adenosine 3',5'-bisphosphate + H(+). Its function is as follows. Transfers the 4'-phosphopantetheine moiety from coenzyme A to a Ser of acyl-carrier-protein. In Rickettsia africae (strain ESF-5), this protein is Holo-[acyl-carrier-protein] synthase.